The sequence spans 1049 residues: Bifunctional cytochrome P450/NADPH--P450 reductase (1049 aa).

The interval 2–472 is cytochrome P450; the sequence is TIKEMPQPKT…STEQSAKKVR (471 aa). Residue Y52 participates in (9Z)-hexadecenoate binding. C401 is a heme binding site. An NADPH--P450 reductase region spans residues 473–1049; the sequence is KKAENAHNTP…GRYAKDVWAG (577 aa). Residues 483–622 enclose the Flavodoxin-like domain; that stretch reads LLVLYGSNMG…TYEEWREHMW (140 aa). FMN-binding positions include 489 to 494, 536 to 539, 570 to 572, and 578 to 580; these read SNMGTA, SYNG, CGD, and TYQ. An FAD-binding FR-type domain is found at 660–892; it reads HGAFSTNVVA…STPQSEFTLP (233 aa).

This sequence in the N-terminal section; belongs to the cytochrome P450 family. Requires FAD as cofactor. It depends on FMN as a cofactor. The cofactor is heme.

It localises to the cytoplasm. It catalyses the reaction 2 oxidized [cytochrome P450] + NADPH = 2 reduced [cytochrome P450] + NADP(+) + H(+). The enzyme catalyses an organic molecule + reduced [NADPH--hemoprotein reductase] + O2 = an alcohol + oxidized [NADPH--hemoprotein reductase] + H2O + H(+). With respect to regulation, inhibited by N-(12-imidazolyl-dodecanoyl)-L-leucine. In terms of biological role, functions as a fatty acid monooxygenase. Catalyzes hydroxylation of fatty acids at omega-1, omega-2 and omega-3 positions. Shows activity toward medium and long-chain fatty acids, with optimum chain lengths of 12, 14 and 16 carbons (lauric, myristic, and palmitic acids). Able to metabolize some of these primary metabolites to secondary and tertiary products. Marginal activity towards short chain lengths of 8-10 carbons. Hydroxylates highly branched fatty acids, which play an essential role in membrane fluidity regulation. Also displays a NADPH-dependent reductase activity in the C-terminal domain, which allows electron transfer from NADPH to the heme iron of the cytochrome P450 N-terminal domain. Involved in inactivation of quorum sensing signals of other competing bacteria by oxidazing efficiently acyl homoserine lactones (AHLs), molecules involved in quorum sensing signaling pathways, and their lactonolysis products acyl homoserines (AHs). In Priestia megaterium (strain ATCC 14581 / DSM 32 / CCUG 1817 / JCM 2506 / NBRC 15308 / NCIMB 9376 / NCTC 10342 / NRRL B-14308 / VKM B-512 / Ford 19) (Bacillus megaterium), this protein is Bifunctional cytochrome P450/NADPH--P450 reductase.